The following is a 118-amino-acid chain: Basic phospholipase A2 nigroxin B (118 aa).

Intrachain disulfides connect Cys-11–Cys-70, Cys-25–Cys-117, Cys-27–Cys-43, Cys-42–Cys-98, Cys-49–Cys-91, Cys-59–Cys-84, and Cys-77–Cys-89. 3 residues coordinate Ca(2+): Tyr-26, Gly-28, and Gly-30. His-46 is a catalytic residue. Asp-47 contacts Ca(2+). The active site involves Asp-92.

The protein belongs to the phospholipase A2 family. Group I subfamily. D49 sub-subfamily. Requires Ca(2+) as cofactor. In terms of tissue distribution, expressed by the venom gland.

It is found in the secreted. It carries out the reaction a 1,2-diacyl-sn-glycero-3-phosphocholine + H2O = a 1-acyl-sn-glycero-3-phosphocholine + a fatty acid + H(+). In terms of biological role, snake venom phospholipase A2 (PLA2) that has only a weak enzymatic activity. It has a myotoxic activity in vivo (dystrophic effect). PLA2 catalyzes the calcium-dependent hydrolysis of the 2-acyl groups in 3-sn-phosphoglycerides. The protein is Basic phospholipase A2 nigroxin B of Micrurus nigrocinctus (Central American coral snake).